A 313-amino-acid chain; its full sequence is Adhesin MafA 1 (313 aa).

A signal peptide spans methionine 1 to alanine 14. The N-palmitoyl cysteine moiety is linked to residue cysteine 15. The S-diacylglycerol cysteine moiety is linked to residue cysteine 15. The segment covering glycine 282–lysine 298 has biased composition (polar residues). Residues glycine 282–glycine 313 form a disordered region.

Belongs to the MafA family.

The protein localises to the cell outer membrane. The protein is Adhesin MafA 1 (mafA1) of Neisseria meningitidis serogroup C / serotype 2a (strain ATCC 700532 / DSM 15464 / FAM18).